Reading from the N-terminus, the 1742-residue chain is NACHT and WD repeat domain-containing protein 2 (1742 aa).

LRR repeat units follow at residues phenylalanine 386–asparagine 410, leucine 677–serine 698, valine 724–glutamine 747, tyrosine 883–phenylalanine 906, and leucine 925–aspartate 953. The 328-residue stretch at asparagine 410–leucine 737 folds into the NACHT domain. WD repeat units follow at residues leucine 963–glutamine 1004, threonine 1007–glutamate 1046, phenylalanine 1140–leucine 1179, lysine 1229–glutamine 1271, glutamate 1272–asparagine 1311, lysine 1314–valine 1353, lysine 1355–arginine 1394, asparagine 1396–asparagine 1434, glutamate 1476–arginine 1516, asparagine 1522–serine 1564, and serine 1614–leucine 1653.

The sequence is that of NACHT and WD repeat domain-containing protein 2 (NWD2) from Homo sapiens (Human).